The following is a 557-amino-acid chain: MDGIVPDIAVGTKRGSDELFSTCVTNGPFIMSSNSASAANGNDSKKFKGDSRSAGVPSRVIHIRKLPIDVTEGEVISLGLPFGKVTNLLMLKGKNQAFIEMNTEEAANTMVNYYTSVTPVLRGQPIYIQFSNHKELKTDSSPNQARAQAALQAVNSVQSGNLALAASAAAVDAGMAMAGQSPVLRIIVENLFYPVTLDVLHQIFSKFGTVLKIITFTKNNQFQALLQYADPVSAQHAKLSLDGQNIYNACCTLRIDFSKLTSLNVKYNNDKSRDYTRPDLPSGDSQPSLDQTMAAAFGAPGIISASPYAGAGFPPTFAIPQAAGLSVPNVHGALAPLAIPSAAAAAAAAGRIAIPGLAGAGNSVLLVSNLNPERVTPQSLFILFGVYGDVQRVKILFNKKENALVQMADGNQAQLAMSHLNGHKLHGKPIRITLSKHQNVQLPREGQEDQGLTKDYGNSPLHRFKKPGSKNFQNIFPPSATLHLSNIPPSVSEEDLKVLFSSNGGVVKGFKFFQKDRKMALIQMGSVEEAVQALIDLHNHDLGENHHLRVSFSKSTI.

Met1 carries the post-translational modification N-acetylmethionine. Ser16 carries the phosphoserine modification. 3 consecutive RRM domains span residues 59–143 (RVIH…SSPN), 184–260 (LRII…FSKL), and 363–437 (SVLL…LSKH). Lys65 participates in a covalent cross-link: Glycyl lysine isopeptide (Lys-Gly) (interchain with G-Cter in SUMO2). Tyr127 carries the post-translational modification Phosphotyrosine. Thr138 bears the Phosphothreonine mark. Ser141 is subject to Phosphoserine. Lys218 participates in a covalent cross-link: Glycyl lysine isopeptide (Lys-Gly) (interchain with G-Cter in SUMO2). A Phosphoserine modification is found at Ser459. Residues 480 to 555 (ATLHLSNIPP…HHLRVSFSKS (76 aa)) form the RRM 4 domain.

As to quaternary structure, monomer. Part of a ternary complex containing KHSRP, PTBP1, PTBP2 and HNRPH1. Interacts with RAVER1 and SFPQ. Interacts with IVNS1ABP (via BACK domain); the interaction is direct.

The protein resides in the nucleus. Functionally, plays a role in pre-mRNA splicing and in the regulation of alternative splicing events. Activates exon skipping of its own pre-mRNA during muscle cell differentiation. Binds to the polypyrimidine tract of introns. May promote RNA looping when bound to two separate polypyrimidine tracts in the same pre-mRNA. May promote the binding of U2 snRNP to pre-mRNA. Cooperates with RAVER1 to modulate switching between mutually exclusive exons during maturation of the TPM1 pre-mRNA. Represses the splicing of MAPT/Tau exon 10. Binds to polypyrimidine-rich controlling element (PCE) of CFTR and promotes exon skipping of CFTR exon 9, thereby antagonizing TIA1 and its role in exon inclusion of CFTR exon 9. Plays a role in the splicing of pyruvate kinase PKM by binding repressively to a polypyrimidine tract flanking PKM exon 9, inhibiting exon 9 inclusion and resulting in exon 10 inclusion and production of the PKM M2 isoform. In case of infection by picornaviruses, binds to the viral internal ribosome entry site (IRES) and stimulates the IRES-mediated translation. The chain is Polypyrimidine tract-binding protein 1 (PTBP1) from Homo sapiens (Human).